Reading from the N-terminus, the 454-residue chain is uncharacterized protein (454 aa).

The HNH domain maps to 364 to 405 (CSRPGCDAPAYHSEVHHVTPWTTTHRTDINDLTLACGPDNRL).

This sequence belongs to the Rv1128c/1148c/1588c/1702c/1945/3466 family.

This is an uncharacterized protein from Mycobacterium tuberculosis (strain CDC 1551 / Oshkosh).